A 235-amino-acid polypeptide reads, in one-letter code: 7-cyano-7-deazaguanine synthase (235 aa).

An ATP-binding site is contributed by 8–18 (FSGGQDSTTCL). Residues C187, C196, C199, and C202 each coordinate Zn(2+).

This sequence belongs to the QueC family. Zn(2+) is required as a cofactor.

It carries out the reaction 7-carboxy-7-deazaguanine + NH4(+) + ATP = 7-cyano-7-deazaguanine + ADP + phosphate + H2O + H(+). Its pathway is purine metabolism; 7-cyano-7-deazaguanine biosynthesis. Catalyzes the ATP-dependent conversion of 7-carboxy-7-deazaguanine (CDG) to 7-cyano-7-deazaguanine (preQ(0)). The protein is 7-cyano-7-deazaguanine synthase of Aeromonas hydrophila subsp. hydrophila (strain ATCC 7966 / DSM 30187 / BCRC 13018 / CCUG 14551 / JCM 1027 / KCTC 2358 / NCIMB 9240 / NCTC 8049).